Here is a 152-residue protein sequence, read N- to C-terminus: Cell division protein SepF (152 aa).

The tract at residues 21 to 56 is disordered; it reads EYIETEQDHPEEHEQQKDKQPAYAQKPQGKQNVVSL. Over residues 26–40 the composition is skewed to basic and acidic residues; that stretch reads EQDHPEEHEQQKDKQ.

The protein belongs to the SepF family. In terms of assembly, homodimer. Interacts with FtsZ.

The protein localises to the cytoplasm. Cell division protein that is part of the divisome complex and is recruited early to the Z-ring. Probably stimulates Z-ring formation, perhaps through the cross-linking of FtsZ protofilaments. Its function overlaps with FtsA. The protein is Cell division protein SepF of Bacillus velezensis (strain DSM 23117 / BGSC 10A6 / LMG 26770 / FZB42) (Bacillus amyloliquefaciens subsp. plantarum).